The following is a 575-amino-acid chain: Hemagglutinin-neuraminidase (575 aa).

The segment covering 1–10 (MDGDRGKRDS) has biased composition (basic and acidic residues). The segment at 1-27 (MDGDRGKRDSYWSTSPSGSTTKPASGW) is disordered. Over 1–37 (MDGDRGKRDSYWSTSPSGSTTKPASGWERSSKADTWL) the chain is Intravirion. Residues 10 to 14 (SYWST) form an incorporation in virion region. A compositionally biased stretch (polar residues) spans 11–23 (YWSTSPSGSTTKP). The chain crosses the membrane as a helical; Signal-anchor for type II membrane protein span at residues 38–58 (LILSFTQWALSIATVIICIII). The interval 59-140 (SARQGYSMKE…RQELTQHCES (82 aa)) is interaction with F protein. Topologically, residues 59-575 (SARQGYSMKE…SIPKLCKAES (517 aa)) are virion surface. Asn-77 carries an N-linked (GlcNAc...) asparagine; by host glycan. 4 disulfide bridges follow: Cys-192-Cys-216, Cys-258-Cys-271, Cys-357-Cys-469, and Cys-463-Cys-473. The segment at 254–259 (NRKSCS) is involved in neuraminidase activity. N-linked (GlcNAc...) asparagine; by host glycosylation is found at Asn-499 and Asn-511. Cysteines 535 and 544 form a disulfide.

This sequence belongs to the paramyxoviruses hemagglutinin-neuraminidase family. In terms of assembly, homotetramer; composed of disulfide-linked homodimers. Interacts with F protein trimer. In terms of processing, N-glycosylated; glycans consist of a mixture of high mannose-type oligosaccharides and of complex-type oligosaccharides.

It is found in the virion membrane. The protein localises to the host cell membrane. It catalyses the reaction Hydrolysis of alpha-(2-&gt;3)-, alpha-(2-&gt;6)-, alpha-(2-&gt;8)- glycosidic linkages of terminal sialic acid residues in oligosaccharides, glycoproteins, glycolipids, colominic acid and synthetic substrates.. Functionally, attaches the virus to sialic acid-containing cell receptors and thereby initiating infection. Binding of HN protein to the receptor induces a conformational change that allows the F protein to trigger virion/cell membranes fusion. Its function is as follows. Neuraminidase activity ensures the efficient spread of the virus by dissociating the mature virions from the neuraminic acid containing glycoproteins. The polypeptide is Hemagglutinin-neuraminidase (HN) (Sendai virus (strain Z) (SeV)).